A 156-amino-acid chain; its full sequence is ATP synthase subunit b (156 aa).

A helical transmembrane segment spans residues 12–32; it reads VAFLIFVLFCMKYVWPPVITA.

Belongs to the ATPase B chain family. As to quaternary structure, F-type ATPases have 2 components, F(1) - the catalytic core - and F(0) - the membrane proton channel. F(1) has five subunits: alpha(3), beta(3), gamma(1), delta(1), epsilon(1). F(0) has three main subunits: a(1), b(2) and c(10-14). The alpha and beta chains form an alternating ring which encloses part of the gamma chain. F(1) is attached to F(0) by a central stalk formed by the gamma and epsilon chains, while a peripheral stalk is formed by the delta and b chains.

It is found in the cell inner membrane. F(1)F(0) ATP synthase produces ATP from ADP in the presence of a proton or sodium gradient. F-type ATPases consist of two structural domains, F(1) containing the extramembraneous catalytic core and F(0) containing the membrane proton channel, linked together by a central stalk and a peripheral stalk. During catalysis, ATP synthesis in the catalytic domain of F(1) is coupled via a rotary mechanism of the central stalk subunits to proton translocation. Functionally, component of the F(0) channel, it forms part of the peripheral stalk, linking F(1) to F(0). This chain is ATP synthase subunit b, found in Pseudomonas putida (strain ATCC 700007 / DSM 6899 / JCM 31910 / BCRC 17059 / LMG 24140 / F1).